We begin with the raw amino-acid sequence, 447 residues long: Mannose/glucose-specific lectin (447 aa).

Tandem repeats lie at residues 1–149 (SLKG…VQPV), 150–295 (PHGT…VKPR), and 296–447 (DVEG…DTAV). Residues 1-447 (SLKGMISVGP…GIFVKPDTAV (447 aa)) form a 3 X approximate tandem repeats region. 3 Jacalin-type lectin domains span residues 5-148 (MISV…FVQP), 153-294 (TISF…YVKP), and 300-443 (SISI…FVKP).

Belongs to the jacalin lectin family. Homodimer. The N-terminus is blocked.

Mannose/glucose specific lectin. Shows agglutinating activity against rabbit erythrocytes. The polypeptide is Mannose/glucose-specific lectin (Parkia platycephala).